Reading from the N-terminus, the 56-residue chain is Large ribosomal subunit protein bL32A (56 aa).

The segment at 1-56 is disordered; it reads MAVPARRTSKAKKNKRRTHKGLTAPGLSRDSETGEYRMSHRISPDGTYKGRTIIEK. Basic residues predominate over residues 7–20; sequence RTSKAKKNKRRTHK. A compositionally biased stretch (basic and acidic residues) spans 29–38; sequence RDSETGEYRM.

The protein belongs to the bacterial ribosomal protein bL32 family.

The sequence is that of Large ribosomal subunit protein bL32A (rpmF1) from Listeria innocua serovar 6a (strain ATCC BAA-680 / CLIP 11262).